Reading from the N-terminus, the 561-residue chain is Serine palmitoyltransferase 2 (561 aa).

A helical transmembrane segment spans residues 57–77 (PYYISLLTYLNYLILIILGHV). Lysine 366 bears the N6-(pyridoxal phosphate)lysine mark. A helical membrane pass occupies residues 443 to 463 (LGFIVYGVADSPVIPLLLYCP).

Belongs to the class-II pyridoxal-phosphate-dependent aminotransferase family. LCB1 and LCB2 encode essential subunits of the enzyme and form a heterodimer. Component of the SPOTS complex, at least composed of LCB1/2 (LCB1 and/or LCB2), ORM1/2 (ORM1 and/or ORM2), SAC1 and TSC3. Interacts with LCB1 and TSC3. Pyridoxal 5'-phosphate serves as cofactor.

It is found in the cytoplasm. The protein localises to the endoplasmic reticulum. It localises to the membrane. It carries out the reaction L-serine + hexadecanoyl-CoA + H(+) = 3-oxosphinganine + CO2 + CoA. Its pathway is lipid metabolism; sphingolipid metabolism. In terms of biological role, catalytic subunit of serine palmitoyltransferase (SPT), which catalyzes the committed step in the synthesis of sphingolipids, the condensation of serine with palmitoyl CoA to form the long chain base 3-ketosphinganine. In Saccharomyces cerevisiae (strain ATCC 204508 / S288c) (Baker's yeast), this protein is Serine palmitoyltransferase 2 (LCB2).